We begin with the raw amino-acid sequence, 143 residues long: Submaxillary gland androgen-regulated protein 2, isoform gamma (143 aa).

The first 22 residues, 1 to 22 (MKALYMVFVLWVLIGCFLSSEC), serve as a signal peptide directing secretion. Positions 28 to 50 (GQHDPTRPLSPSNPSSHFYPQPD) are disordered. Positions 36 to 45 (LSPSNPSSHF) are enriched in polar residues.

It localises to the secreted. In terms of biological role, may play a role in protection or detoxification. The protein is Submaxillary gland androgen-regulated protein 2, isoform gamma (Smr2) of Mus musculus (Mouse).